A 747-amino-acid chain; its full sequence is ATP-dependent RNA helicase DBP7 (747 aa).

2 disordered regions span residues 1–102 (MDDD…TYVS) and 111–130 (SKLENEKVEEEKTYLPSNAP). The span at 15–24 (SNASSKSSAQ) shows a compositional bias: polar residues. Composition is skewed to basic and acidic residues over residues 75–96 (SFREEQLAKRPKYFESRGEGGK) and 111–123 (SKLENEKVEEEKT). The short motif at 135–164 (DDFNGLGLNDNLVHHLTESLRFKNPTQIQK) is the Q motif element. The 196-residue stretch at 168–363 (PSLLSTSRDL…SIILNNPEQI (196 aa)) folds into the Helicase ATP-binding domain. Position 181 to 188 (181 to 188 (AQTGSGKT)) interacts with ATP. Residues 295 to 298 (DEGD) carry the DEAD box motif. The region spanning 401 to 626 (TLSAVLKEVA…SSEIKKSDPK (226 aa)) is the Helicase C-terminal domain. Residues 700–729 (KKLGSLATKSSSTRKEYGEKSRKLEDPRKK) are disordered. The span at 712-728 (TRKEYGEKSRKLEDPRK) shows a compositional bias: basic and acidic residues.

The protein belongs to the DEAD box helicase family. DDX31/DBP7 subfamily.

Its subcellular location is the nucleus. The protein localises to the nucleolus. It carries out the reaction ATP + H2O = ADP + phosphate + H(+). Functionally, ATP-binding RNA helicase involved in the biogenesis of 60S ribosomal subunits and is required for the normal formation of 25S and 5.8S rRNAs. The chain is ATP-dependent RNA helicase DBP7 (DBP7) from Meyerozyma guilliermondii (strain ATCC 6260 / CBS 566 / DSM 6381 / JCM 1539 / NBRC 10279 / NRRL Y-324) (Yeast).